A 326-amino-acid polypeptide reads, in one-letter code: Tetraacyldisaccharide 4'-kinase (326 aa).

55–62 lines the ATP pocket; it reads TAGGNGKT.

It belongs to the LpxK family.

It carries out the reaction a lipid A disaccharide + ATP = a lipid IVA + ADP + H(+). The protein operates within glycolipid biosynthesis; lipid IV(A) biosynthesis; lipid IV(A) from (3R)-3-hydroxytetradecanoyl-[acyl-carrier-protein] and UDP-N-acetyl-alpha-D-glucosamine: step 6/6. Functionally, transfers the gamma-phosphate of ATP to the 4'-position of a tetraacyldisaccharide 1-phosphate intermediate (termed DS-1-P) to form tetraacyldisaccharide 1,4'-bis-phosphate (lipid IVA). In Klebsiella pneumoniae subsp. pneumoniae (strain ATCC 700721 / MGH 78578), this protein is Tetraacyldisaccharide 4'-kinase.